Consider the following 212-residue polypeptide: Pyridoxine/pyridoxamine 5'-phosphate oxidase (212 aa).

Substrate-binding positions include Arg-9 to Tyr-12 and Lys-67. Residues Arg-62–Lys-67, Phe-77–Thr-78, Arg-83, and Lys-84 contribute to the FMN site. Residues Tyr-124, Arg-128, and Ser-132 each contribute to the substrate site. FMN is bound by residues Gln-141 to Ser-142 and Trp-185. Position 191 to 193 (Arg-191 to His-193) interacts with substrate. Residue Arg-195 participates in FMN binding.

The protein belongs to the pyridoxamine 5'-phosphate oxidase family. In terms of assembly, homodimer. FMN is required as a cofactor.

It catalyses the reaction pyridoxamine 5'-phosphate + O2 + H2O = pyridoxal 5'-phosphate + H2O2 + NH4(+). The enzyme catalyses pyridoxine 5'-phosphate + O2 = pyridoxal 5'-phosphate + H2O2. It functions in the pathway cofactor metabolism; pyridoxal 5'-phosphate salvage; pyridoxal 5'-phosphate from pyridoxamine 5'-phosphate: step 1/1. The protein operates within cofactor metabolism; pyridoxal 5'-phosphate salvage; pyridoxal 5'-phosphate from pyridoxine 5'-phosphate: step 1/1. In terms of biological role, catalyzes the oxidation of either pyridoxine 5'-phosphate (PNP) or pyridoxamine 5'-phosphate (PMP) into pyridoxal 5'-phosphate (PLP). The polypeptide is Pyridoxine/pyridoxamine 5'-phosphate oxidase (Verminephrobacter eiseniae (strain EF01-2)).